The primary structure comprises 343 residues: Nod factor export ATP-binding protein I (343 aa).

The segment covering 1-14 (MQLLTRANVSSSPS) has biased composition (polar residues). Residues 1–38 (MQLLTRANVSSSPSRRPESNALKQKCHGHSNADNSLSR) form a disordered region. In terms of domain architecture, ABC transporter spans 45–275 (IELTNVSKSY…QIGCDVIEIY (231 aa)). Residue 77 to 84 (GPNGAGKS) participates in ATP binding.

The protein belongs to the ABC transporter superfamily. Lipooligosaccharide exporter (TC 3.A.1.102) family. In terms of assembly, the complex is composed of two ATP-binding proteins (NodI) and two transmembrane proteins (NodJ).

The protein resides in the cell inner membrane. Functionally, part of the ABC transporter complex NodIJ involved in the export of the nodulation factors (Nod factors), the bacterial signal molecules that induce symbiosis and subsequent nodulation induction. Nod factors are LCO (lipo-chitin oligosaccharide), a modified beta-1,4-linked N-acetylglucosamine oligosaccharide. This subunit is responsible for energy coupling to the transport system. The polypeptide is Nod factor export ATP-binding protein I (Sinorhizobium fredii (strain NBRC 101917 / NGR234)).